The primary structure comprises 108 residues: Pyrimidine/purine nucleoside phosphorylase (108 aa).

This sequence belongs to the nucleoside phosphorylase PpnP family.

It carries out the reaction a purine D-ribonucleoside + phosphate = a purine nucleobase + alpha-D-ribose 1-phosphate. The catalysed reaction is adenosine + phosphate = alpha-D-ribose 1-phosphate + adenine. The enzyme catalyses cytidine + phosphate = cytosine + alpha-D-ribose 1-phosphate. It catalyses the reaction guanosine + phosphate = alpha-D-ribose 1-phosphate + guanine. It carries out the reaction inosine + phosphate = alpha-D-ribose 1-phosphate + hypoxanthine. The catalysed reaction is thymidine + phosphate = 2-deoxy-alpha-D-ribose 1-phosphate + thymine. The enzyme catalyses uridine + phosphate = alpha-D-ribose 1-phosphate + uracil. It catalyses the reaction xanthosine + phosphate = alpha-D-ribose 1-phosphate + xanthine. In terms of biological role, catalyzes the phosphorolysis of diverse nucleosides, yielding D-ribose 1-phosphate and the respective free bases. Can use uridine, adenosine, guanosine, cytidine, thymidine, inosine and xanthosine as substrates. Also catalyzes the reverse reactions. This is Pyrimidine/purine nucleoside phosphorylase from Polaromonas sp. (strain JS666 / ATCC BAA-500).